The sequence spans 270 residues: Replication protein A 32 kDa subunit (270 aa).

Residue Met1 is modified to N-acetylmethionine. Phosphoserine; by PRKDC is present on residues Ser4 and Ser8. A Phosphothreonine; by PRKDC modification is found at Thr21. The tract at residues 21 to 41 is disordered; that stretch reads TQSPGGFGSPAPSQAEKKSRA. Position 23 is a phosphoserine; by CDK2 (Ser23). Position 29 is a phosphoserine; by CDK1 (Ser29). Phosphoserine; by PRKDC is present on Ser33. Glycyl lysine isopeptide (Lys-Gly) (interchain with G-Cter in ubiquitin) cross-links involve residues Lys37 and Lys38. Residues 74–148 constitute a DNA-binding region (OB); sequence VTIVGIIRHA…KSLVAFKIMP (75 aa). Residues 187–270 are interaction with RAD52, TIPIN, UNG and XPA; it reads GMSEAGNFGG…DDHFKSTDAE (84 aa).

It belongs to the replication factor A protein 2 family. As to quaternary structure, component of the replication protein A complex (RPA/RP-A), a heterotrimeric complex composed of RPA1, RPA2 and RPA3. Interacts with PRPF19; the PRP19-CDC5L complex is recruited to the sites of DNA repair where it ubiquitinates the replication protein A complex (RPA). Interacts with SERTAD3. Interacts with TIPIN. Interacts with TIMELESS. Interacts with PPP4R2; the interaction is direct, DNA damage-dependent and mediates the recruitment of the PP4 catalytic subunit PPP4C. Interacts (hyperphosphorylated) with RAD51. Interacts with SMARCAL1; the interaction is direct and mediates the recruitment to the RPA complex of SMARCAL1. Interacts with RAD52 and XPA; those interactions are direct and associate RAD52 and XPA to the RPA complex. Interacts with FBH1. Interacts with ETAA1; the interaction is direct and promotes ETAA1 recruitment at stalled replication forks. Interacts with RFWD3. Interacts with DDI2. Interacts (in unphosphorylated form via N-terminus) with EIF4EBP3; the interaction enhances EIF4EBP3-mediated inhibition of EIF4E-mediated mRNA nuclear export. Interacts with BRIP1/FANCJ via the RPA1 subunit; following DNA damage they colocalize in foci in the nucleus. Interacts with nuclear UNG (isoform 2); this interaction mediates UNG recruitment to RPA-coated single-stranded DNA at stalled replication forks. Post-translationally, differentially phosphorylated throughout the cell cycle, becoming phosphorylated at the G1-S transition and dephosphorylated in late mitosis. Mainly phosphorylated at Ser-23 and Ser-29, by cyclin A-CDK2 and cyclin B-CDK1, respectively during DNA replication and mitosis. Dephosphorylation may require the serine/threonine-protein phosphatase 4. Phosphorylation at Ser-23 and Ser-29 is a prerequisite for further phosphorylation. Becomes hyperphosphorylated on additional residues including Ser-4, Ser-8, Thr-21 and Ser-33 in response to DNA damage. Hyperphosphorylation is mediated by ATM, ATR and PRKDC. Primarily recruited to DNA repair nuclear foci as a hypophosphorylated form it undergoes subsequent hyperphosphorylation, catalyzed by ATR. Hyperphosphorylation is required for RAD51 recruitment to chromatin and efficient DNA repair. Phosphorylation at Thr-21 depends upon RFWD3 presence. DNA damage-induced 'Lys-63'-linked polyubiquitination by PRPF19 mediates ATRIP recruitment to the RPA complex at sites of DNA damage and activation of ATR. Ubiquitinated by RFWD3 at stalled replication forks in response to DNA damage: ubiquitination by RFWD3 does not lead to degradation by the proteasome and promotes removal of the RPA complex from stalled replication forks, promoting homologous recombination.

It is found in the nucleus. It localises to the PML body. In terms of biological role, as part of the heterotrimeric replication protein A complex (RPA/RP-A), binds and stabilizes single-stranded DNA intermediates that form during DNA replication or upon DNA stress. It prevents their reannealing and in parallel, recruits and activates different proteins and complexes involved in DNA metabolism. Thereby, it plays an essential role both in DNA replication and the cellular response to DNA damage. In the cellular response to DNA damage, the RPA complex controls DNA repair and DNA damage checkpoint activation. Through recruitment of ATRIP activates the ATR kinase a master regulator of the DNA damage response. It is required for the recruitment of the DNA double-strand break repair factors RAD51 and RAD52 to chromatin in response to DNA damage. Also recruits to sites of DNA damage proteins like XPA and XPG that are involved in nucleotide excision repair and is required for this mechanism of DNA repair. Also plays a role in base excision repair (BER) probably through interaction with UNG. Also recruits SMARCAL1/HARP, which is involved in replication fork restart, to sites of DNA damage. May also play a role in telomere maintenance. RPA stimulates 5'-3' helicase activity of BRIP1/FANCJ. The sequence is that of Replication protein A 32 kDa subunit (RPA2) from Homo sapiens (Human).